An 89-amino-acid chain; its full sequence is Small ribosomal subunit protein uS15 (89 aa).

This sequence belongs to the universal ribosomal protein uS15 family. In terms of assembly, part of the 30S ribosomal subunit. Forms a bridge to the 50S subunit in the 70S ribosome, contacting the 23S rRNA.

In terms of biological role, one of the primary rRNA binding proteins, it binds directly to 16S rRNA where it helps nucleate assembly of the platform of the 30S subunit by binding and bridging several RNA helices of the 16S rRNA. Forms an intersubunit bridge (bridge B4) with the 23S rRNA of the 50S subunit in the ribosome. In Lactobacillus gasseri (strain ATCC 33323 / DSM 20243 / BCRC 14619 / CIP 102991 / JCM 1131 / KCTC 3163 / NCIMB 11718 / NCTC 13722 / AM63), this protein is Small ribosomal subunit protein uS15.